A 149-amino-acid chain; its full sequence is Large ribosomal subunit protein bL9 (149 aa).

The protein belongs to the bacterial ribosomal protein bL9 family.

Binds to the 23S rRNA. This Rubrobacter xylanophilus (strain DSM 9941 / JCM 11954 / NBRC 16129 / PRD-1) protein is Large ribosomal subunit protein bL9.